We begin with the raw amino-acid sequence, 67 residues long: UPF0337 protein SP_1805 (67 aa).

Residues methionine 1 to glutamate 30 form a disordered region.

Belongs to the UPF0337 (CsbD) family.

The polypeptide is UPF0337 protein SP_1805 (Streptococcus pneumoniae serotype 4 (strain ATCC BAA-334 / TIGR4)).